Consider the following 103-residue polypeptide: uncharacterized protein (103 aa).

The protein resides in the plastid. Its subcellular location is the chloroplast. This is an uncharacterized protein from Auxenochlorella pyrenoidosa (Freshwater green alga).